Consider the following 130-residue polypeptide: Small ribosomal subunit protein uS8 (130 aa).

It belongs to the universal ribosomal protein uS8 family. As to quaternary structure, part of the 30S ribosomal subunit.

In terms of biological role, one of the primary rRNA binding proteins, it binds directly to 16S rRNA central domain where it helps coordinate assembly of the platform of the 30S subunit. The sequence is that of Small ribosomal subunit protein uS8 from Methanoculleus marisnigri (strain ATCC 35101 / DSM 1498 / JR1).